We begin with the raw amino-acid sequence, 494 residues long: ATP synthase subunit alpha 1 (494 aa).

This sequence belongs to the ATPase alpha/beta chains family. As to quaternary structure, F-type ATPases have 2 components, CF(1) - the catalytic core - and CF(0) - the membrane proton channel. CF(1) has five subunits: alpha(3), beta(3), gamma(1), delta(1), epsilon(1). CF(0) has three main subunits: a(1), b(2) and c(9-12). The alpha and beta chains form an alternating ring which encloses part of the gamma chain. CF(1) is attached to CF(0) by a central stalk formed by the gamma and epsilon chains, while a peripheral stalk is formed by the delta and b chains.

The protein resides in the cell inner membrane. The enzyme catalyses ATP + H2O + 4 H(+)(in) = ADP + phosphate + 5 H(+)(out). Its function is as follows. Produces ATP from ADP in the presence of a proton gradient across the membrane. The alpha chain is a regulatory subunit. This chain is ATP synthase subunit alpha 1, found in Hahella chejuensis (strain KCTC 2396).